A 641-amino-acid chain; its full sequence is MHVKKYLLKCLHRLQKGPGYTYKELLVWYCDNTNTHGPKRIIREGPKKKAMWFLITLLFASLVCWQWGVFIKTYLSWEVSVSLSMGFKAMDFPAVTICNASPFRYSKVRHLLKDLDELMEAVLARILAPESSQANATAAMNLSMWNYTPLVLIDERDPHHPVVLDLFANDPTGSASSSPGPRGACNAQGCKVAMRLCSLNGTSCTFRNFSSATQAVTEWYALQATNIFSQVPQRELVELGYSAERLILACLFGAEPCSYRNFTSIFYPDYGNCYVFNWGMTEKALPSANPGTEFGLKLILDIGQEDYVPFLASTAGVRLMLHEQRSYPFIREEGVDAMSGTETSIGVLVDKLQRKGEPYSPCTVNGSDVPVQNLYGSYNTTYSIQACLHSCFQTQMIASCQCGHYLYPLPRGQEYCNSRDFPDWAPCYLALRMSEAERETCIRMCKESCNDTQYKMTISMADWPSEASEDWIFHVLSQERDQSTNVTLSRKGVVKLNIYFQEFNYRTIEESAANNIVWLLSNLGGQFGFWMGGSVLCLIEFAEIIIDFVWITIIKLVALAKGLRQRQAQARYAGPPPTVAELVEAHTNFGFQPDVGHRSPDAEAYPDEQALPIPGTPPPNYDSLRLQPLDVVESDSEGDAV.

Over 1–50 the chain is Cytoplasmic; it reads MHVKKYLLKCLHRLQKGPGYTYKELLVWYCDNTNTHGPKRIIREGPKKKA. Residues 51-71 traverse the membrane as a helical segment; that stretch reads MWFLITLLFASLVCWQWGVFI. The Extracellular segment spans residues 72-533; the sequence is KTYLSWEVSV…GGQFGFWMGG (462 aa). Cystine bridges form between cysteine 98-cysteine 273, cysteine 185-cysteine 190, cysteine 197-cysteine 204, cysteine 250-cysteine 257, cysteine 362-cysteine 449, cysteine 387-cysteine 445, cysteine 391-cysteine 441, cysteine 400-cysteine 427, and cysteine 402-cysteine 416. N-linked (GlcNAc...) asparagine glycosylation occurs at asparagine 141. Asparagine 261 and asparagine 379 each carry an N-linked (GlcNAc...) asparagine glycan. The helical transmembrane segment at 534–554 threads the bilayer; sequence SVLCLIEFAEIIIDFVWITII. The Cytoplasmic segment spans residues 555–641; the sequence is KLVALAKGLR…VESDSEGDAV (87 aa). Positions 596–641 are disordered; it reads GHRSPDAEAYPDEQALPIPGTPPPNYDSLRLQPLDVVESDSEGDAV. Residues 617 to 621 carry the PY motif; recruits WW domain-containing proteins and is thereby required for ubiquitination and inhibition of the channel by NEDD4 and NEDD4L motif; the sequence is PPPNY. A compositionally biased stretch (acidic residues) spans 632-641; sequence VESDSEGDAV. 2 positions are modified to phosphoserine: serine 634 and serine 636.

Belongs to the amiloride-sensitive sodium channel (TC 1.A.6) family. SCNN1B subfamily. In terms of assembly, component of the heterotrimeric epithelial sodium channel (ENaC) composed of an alpha/SCNN1A, a beta/SCNN1B and a gamma/SCNN1G subunit. Interacts with WWP1 (via WW domains). Interacts with WWP2 (via WW domains); inhibits the channel. Interacts with the full-length immature form of PCSK9 (pro-PCSK9). Interacts (N-glycosylated) with BPIFA1; the interaction is direct and inhibits the proteolytic processing of SCNN1A and SCNN1G and the activation of ENaC. Ubiquitinated. Can be ubiquitinated at multiple sites and undergo monoubiquitination and polyubiquitination. Ubiquitination by NEDD4 or NEDD4L inhibits the ENaC channel through endocytosis, intracellular retention and degradation of its individual subunits. However, some studies could not confirm the ubiquitination of this subunit of the ENaC. Post-translationally, phosphorylated on serine and threonine residues. Aldosterone and insulin increase the basal level of phosphorylation. In terms of processing, N-glycosylated. N-glycosylation is required for interaction with BPIFA1.

The protein localises to the apical cell membrane. It localises to the cytoplasmic vesicle membrane. It catalyses the reaction Na(+)(in) = Na(+)(out). With respect to regulation, originally identified and characterized by its inhibition by the diuretic drug amiloride. Its function is as follows. This is one of the three pore-forming subunits of the heterotrimeric epithelial sodium channel (ENaC), a critical regulator of sodium balance and fluid homeostasis. ENaC operates in epithelial tissues, where it mediates the electrodiffusion of sodium ions from extracellular fluid through the apical membrane of cells, with water following osmotically. It plays a key role in maintaining sodium homeostasis through electrogenic sodium reabsorption in the kidneys. Additionally, ENaC is essential for airway surface liquid homeostasis, which is crucial for proper mucus clearance. The chain is Epithelial sodium channel subunit beta from Oryctolagus cuniculus (Rabbit).